Reading from the N-terminus, the 116-residue chain is Small ribosomal subunit protein uS8c (116 aa).

Belongs to the universal ribosomal protein uS8 family. Part of the 30S ribosomal subunit.

Its subcellular location is the plastid. It localises to the chloroplast. One of the primary rRNA binding proteins, it binds directly to 16S rRNA central domain where it helps coordinate assembly of the platform of the 30S subunit. The protein is Small ribosomal subunit protein uS8c (rps8) of Musa acuminata (Banana).